The following is a 102-amino-acid chain: Monothiol glutaredoxin-S4 (102 aa).

Positions 1–101 constitute a Glutaredoxin domain; the sequence is MDKLQKMISE…PMLKRVGALW (101 aa). [2Fe-2S] cluster is bound at residue cysteine 21. The Responsive for interaction with TGA factors signature appears at 99–102; that stretch reads ALWL.

The protein belongs to the glutaredoxin family. CC-type subfamily.

Its subcellular location is the cytoplasm. The protein resides in the nucleus. Functionally, may only reduce GSH-thiol disulfides, but not protein disulfides. The polypeptide is Monothiol glutaredoxin-S4 (GRXS4) (Arabidopsis thaliana (Mouse-ear cress)).